A 73-amino-acid chain; its full sequence is Small ribosomal subunit protein bS18 (73 aa).

Belongs to the bacterial ribosomal protein bS18 family. Part of the 30S ribosomal subunit. Forms a tight heterodimer with protein bS6.

Its function is as follows. Binds as a heterodimer with protein bS6 to the central domain of the 16S rRNA, where it helps stabilize the platform of the 30S subunit. This Prochlorococcus marinus (strain SARG / CCMP1375 / SS120) protein is Small ribosomal subunit protein bS18.